We begin with the raw amino-acid sequence, 203 residues long: Small ribosomal subunit protein uS4 (203 aa).

Residues 20–44 (LPGLTRKRPKNTNPPGMHGAERKKK) are disordered. Residues 92–155 (MRLDCIVFRL…SSRKLVAAYA (64 aa)) form the S4 RNA-binding domain.

Belongs to the universal ribosomal protein uS4 family. In terms of assembly, part of the 30S ribosomal subunit. Contacts protein S5. The interaction surface between S4 and S5 is involved in control of translational fidelity.

One of the primary rRNA binding proteins, it binds directly to 16S rRNA where it nucleates assembly of the body of the 30S subunit. In terms of biological role, with S5 and S12 plays an important role in translational accuracy. In Synechococcus sp. (strain JA-2-3B'a(2-13)) (Cyanobacteria bacterium Yellowstone B-Prime), this protein is Small ribosomal subunit protein uS4.